Here is a 132-residue protein sequence, read N- to C-terminus: ATP synthase epsilon chain (132 aa).

Belongs to the ATPase epsilon chain family. In terms of assembly, F-type ATPases have 2 components, CF(1) - the catalytic core - and CF(0) - the membrane proton channel. CF(1) has five subunits: alpha(3), beta(3), gamma(1), delta(1), epsilon(1). CF(0) has three main subunits: a, b and c.

It localises to the cell inner membrane. Produces ATP from ADP in the presence of a proton gradient across the membrane. The chain is ATP synthase epsilon chain from Anaeromyxobacter dehalogenans (strain 2CP-1 / ATCC BAA-258).